The following is a 543-amino-acid chain: CTP synthase (543 aa).

The segment at 1–265 is amidoligase domain; sequence MTRYIFVTGG…DDFVVERFGL (265 aa). CTP is bound at residue S13. Position 13 (S13) interacts with UTP. ATP-binding positions include 14-19 and D71; that span reads SLGKGI. Residues D71 and E139 each coordinate Mg(2+). CTP is bound by residues 146-148, 186-191, and K222; these read DIE and KTKPTQ. UTP contacts are provided by residues 186-191 and K222; that span reads KTKPTQ. One can recognise a Glutamine amidotransferase type-1 domain in the interval 290–541; that stretch reads TIAMVGKYME…VNAALAQKAK (252 aa). An L-glutamine-binding site is contributed by G351. The Nucleophile; for glutamine hydrolysis role is filled by C378. Residues 379-382, E402, and R469 each bind L-glutamine; that span reads LGMQ. Catalysis depends on residues H514 and E516.

The protein belongs to the CTP synthase family. In terms of assembly, homotetramer.

The enzyme catalyses UTP + L-glutamine + ATP + H2O = CTP + L-glutamate + ADP + phosphate + 2 H(+). It carries out the reaction L-glutamine + H2O = L-glutamate + NH4(+). It catalyses the reaction UTP + NH4(+) + ATP = CTP + ADP + phosphate + 2 H(+). Its pathway is pyrimidine metabolism; CTP biosynthesis via de novo pathway; CTP from UDP: step 2/2. Allosterically activated by GTP, when glutamine is the substrate; GTP has no effect on the reaction when ammonia is the substrate. The allosteric effector GTP functions by stabilizing the protein conformation that binds the tetrahedral intermediate(s) formed during glutamine hydrolysis. Inhibited by the product CTP, via allosteric rather than competitive inhibition. Catalyzes the ATP-dependent amination of UTP to CTP with either L-glutamine or ammonia as the source of nitrogen. Regulates intracellular CTP levels through interactions with the four ribonucleotide triphosphates. This Ectopseudomonas mendocina (strain ymp) (Pseudomonas mendocina) protein is CTP synthase.